The primary structure comprises 198 residues: Small ribosomal subunit protein uS7 (198 aa).

The protein belongs to the universal ribosomal protein uS7 family. Part of the 30S ribosomal subunit.

Functionally, one of the primary rRNA binding proteins, it binds directly to 16S rRNA where it nucleates assembly of the head domain of the 30S subunit. Is located at the subunit interface close to the decoding center. In Desulfurococcus amylolyticus (strain DSM 18924 / JCM 16383 / VKM B-2413 / 1221n) (Desulfurococcus kamchatkensis), this protein is Small ribosomal subunit protein uS7.